We begin with the raw amino-acid sequence, 327 residues long: Glycerol-3-phosphate dehydrogenase [NAD(P)+] (327 aa).

Residues Trp15, Arg35, and Lys109 each contribute to the NADPH site. Lys109, Gly137, and Ser139 together coordinate sn-glycerol 3-phosphate. Ala141 contacts NADPH. Sn-glycerol 3-phosphate contacts are provided by Lys192, Asp245, Ser255, Arg256, and Asn257. The active-site Proton acceptor is Lys192. Residue Arg256 participates in NADPH binding. NADPH-binding residues include Leu275 and Glu277.

This sequence belongs to the NAD-dependent glycerol-3-phosphate dehydrogenase family.

It localises to the cytoplasm. It catalyses the reaction sn-glycerol 3-phosphate + NAD(+) = dihydroxyacetone phosphate + NADH + H(+). The catalysed reaction is sn-glycerol 3-phosphate + NADP(+) = dihydroxyacetone phosphate + NADPH + H(+). The protein operates within membrane lipid metabolism; glycerophospholipid metabolism. Functionally, catalyzes the reduction of the glycolytic intermediate dihydroxyacetone phosphate (DHAP) to sn-glycerol 3-phosphate (G3P), the key precursor for phospholipid synthesis. The sequence is that of Glycerol-3-phosphate dehydrogenase [NAD(P)+] from Chelativorans sp. (strain BNC1).